A 764-amino-acid chain; its full sequence is 5-methyltetrahydropteroyltriglutamate--homocysteine methyltransferase (764 aa).

Residues 16–19 and Lys112 contribute to the 5-methyltetrahydropteroyltri-L-glutamate site; that span reads RELK. L-homocysteine contacts are provided by residues 431 to 433 and Glu484; that span reads IGS. Residues 431–433 and Glu484 each bind L-methionine; that span reads IGS. Residues 515-516 and Trp561 each bind 5-methyltetrahydropteroyltri-L-glutamate; that span reads RC. Residue Asp599 participates in L-homocysteine binding. Residue Asp599 participates in L-methionine binding. Position 605 (Glu605) interacts with 5-methyltetrahydropteroyltri-L-glutamate. Residues His641, Cys643, and Glu665 each coordinate Zn(2+). His694 (proton donor) is an active-site residue. Cys726 serves as a coordination point for Zn(2+).

It belongs to the vitamin-B12 independent methionine synthase family. The cofactor is Zn(2+).

It catalyses the reaction 5-methyltetrahydropteroyltri-L-glutamate + L-homocysteine = tetrahydropteroyltri-L-glutamate + L-methionine. It participates in amino-acid biosynthesis; L-methionine biosynthesis via de novo pathway; L-methionine from L-homocysteine (MetE route): step 1/1. Catalyzes the transfer of a methyl group from 5-methyltetrahydrofolate to homocysteine resulting in methionine formation. In Paraburkholderia xenovorans (strain LB400), this protein is 5-methyltetrahydropteroyltriglutamate--homocysteine methyltransferase.